The chain runs to 361 residues: UDP-3-O-acylglucosamine N-acyltransferase (361 aa).

The active-site Proton acceptor is H253.

This sequence belongs to the transferase hexapeptide repeat family. LpxD subfamily. As to quaternary structure, homotrimer.

It catalyses the reaction a UDP-3-O-[(3R)-3-hydroxyacyl]-alpha-D-glucosamine + a (3R)-hydroxyacyl-[ACP] = a UDP-2-N,3-O-bis[(3R)-3-hydroxyacyl]-alpha-D-glucosamine + holo-[ACP] + H(+). It functions in the pathway bacterial outer membrane biogenesis; LPS lipid A biosynthesis. Its function is as follows. Catalyzes the N-acylation of UDP-3-O-acylglucosamine using 3-hydroxyacyl-ACP as the acyl donor. Is involved in the biosynthesis of lipid A, a phosphorylated glycolipid that anchors the lipopolysaccharide to the outer membrane of the cell. This chain is UDP-3-O-acylglucosamine N-acyltransferase, found in Burkholderia thailandensis (strain ATCC 700388 / DSM 13276 / CCUG 48851 / CIP 106301 / E264).